We begin with the raw amino-acid sequence, 270 residues long: Formamidopyrimidine-DNA glycosylase (270 aa).

Residue P2 is the Schiff-base intermediate with DNA of the active site. E3 acts as the Proton donor in catalysis. Residue K58 is the Proton donor; for beta-elimination activity of the active site. 3 residues coordinate DNA: H91, R110, and R151. The segment at 236 to 270 (AVYGREGEPCTHCGAPLQGVRIGGRATIYCSQCQR) adopts an FPG-type zinc-finger fold. R260 acts as the Proton donor; for delta-elimination activity in catalysis.

The protein belongs to the FPG family. Monomer. Zn(2+) serves as cofactor.

The enzyme catalyses Hydrolysis of DNA containing ring-opened 7-methylguanine residues, releasing 2,6-diamino-4-hydroxy-5-(N-methyl)formamidopyrimidine.. The catalysed reaction is 2'-deoxyribonucleotide-(2'-deoxyribose 5'-phosphate)-2'-deoxyribonucleotide-DNA = a 3'-end 2'-deoxyribonucleotide-(2,3-dehydro-2,3-deoxyribose 5'-phosphate)-DNA + a 5'-end 5'-phospho-2'-deoxyribonucleoside-DNA + H(+). Functionally, involved in base excision repair of DNA damaged by oxidation or by mutagenic agents. Acts as a DNA glycosylase that recognizes and removes damaged bases. Has a preference for oxidized purines, such as 7,8-dihydro-8-oxoguanine (8-oxoG). Has AP (apurinic/apyrimidinic) lyase activity and introduces nicks in the DNA strand. Cleaves the DNA backbone by beta-delta elimination to generate a single-strand break at the site of the removed base with both 3'- and 5'-phosphates. The sequence is that of Formamidopyrimidine-DNA glycosylase from Acidithiobacillus ferrooxidans (strain ATCC 23270 / DSM 14882 / CIP 104768 / NCIMB 8455) (Ferrobacillus ferrooxidans (strain ATCC 23270)).